The primary structure comprises 157 residues: MKISLMAAVSENGVIGSGLDIPWHVQGEQLLFKAMTYNQWLLVGRKTFDSMGKLPNRKYAVVTRSKIISNDPDVVYFASVESALAYLNNATAHIFVSGGGEIYKALIDQADVIHLSVIHKHISGDVFFPPVPQGFKQTFEQSFSSNIDYTYQIWAKG.

A DHFR domain is found at 2–156; the sequence is KISLMAAVSE…IDYTYQIWAK (155 aa).

The protein belongs to the dihydrofolate reductase family. As to quaternary structure, homodimer.

The catalysed reaction is (6S)-5,6,7,8-tetrahydrofolate + NADP(+) = 7,8-dihydrofolate + NADPH + H(+). The protein operates within cofactor biosynthesis; tetrahydrofolate biosynthesis; 5,6,7,8-tetrahydrofolate from 7,8-dihydrofolate: step 1/1. Key enzyme in folate metabolism. Catalyzes an essential reaction for de novo glycine and purine synthesis, and for DNA precursor synthesis. The sequence is that of Dihydrofolate reductase type 6 (dhfrVI) from Proteus mirabilis.